Here is a 198-residue protein sequence, read N- to C-terminus: dITP/XTP pyrophosphatase (198 aa).

7–12 (TRNAGK) serves as a coordination point for substrate. Positions 40 and 69 each coordinate Mg(2+). D69 functions as the Proton acceptor in the catalytic mechanism. Substrate is bound by residues S70, 152–155 (FGYD), K175, and 180–181 (HR).

This sequence belongs to the HAM1 NTPase family. Homodimer. The cofactor is Mg(2+).

It catalyses the reaction XTP + H2O = XMP + diphosphate + H(+). It carries out the reaction dITP + H2O = dIMP + diphosphate + H(+). The catalysed reaction is ITP + H2O = IMP + diphosphate + H(+). Its function is as follows. Pyrophosphatase that catalyzes the hydrolysis of nucleoside triphosphates to their monophosphate derivatives, with a high preference for the non-canonical purine nucleotides XTP (xanthosine triphosphate), dITP (deoxyinosine triphosphate) and ITP. Seems to function as a house-cleaning enzyme that removes non-canonical purine nucleotides from the nucleotide pool, thus preventing their incorporation into DNA/RNA and avoiding chromosomal lesions. In Exiguobacterium sibiricum (strain DSM 17290 / CCUG 55495 / CIP 109462 / JCM 13490 / 255-15), this protein is dITP/XTP pyrophosphatase.